The sequence spans 233 residues: ATP-dependent Clp protease proteolytic subunit 1 (233 aa).

Ser-116 (nucleophile) is an active-site residue. His-141 is a catalytic residue.

Belongs to the peptidase S14 family. Fourteen ClpP subunits assemble into 2 heptameric rings which stack back to back to give a disk-like structure with a central cavity, resembling the structure of eukaryotic proteasomes.

The protein localises to the cytoplasm. The enzyme catalyses Hydrolysis of proteins to small peptides in the presence of ATP and magnesium. alpha-casein is the usual test substrate. In the absence of ATP, only oligopeptides shorter than five residues are hydrolyzed (such as succinyl-Leu-Tyr-|-NHMec, and Leu-Tyr-Leu-|-Tyr-Trp, in which cleavage of the -Tyr-|-Leu- and -Tyr-|-Trp bonds also occurs).. Cleaves peptides in various proteins in a process that requires ATP hydrolysis. Has a chymotrypsin-like activity. Plays a major role in the degradation of misfolded proteins. The polypeptide is ATP-dependent Clp protease proteolytic subunit 1 (Salinibacter ruber (strain DSM 13855 / M31)).